Reading from the N-terminus, the 491-residue chain is Protein phosphatase ppm-1.G (491 aa).

Positions 23-486 constitute a PPM-type phosphatase domain; sequence SYACTTMQGW…DNMTVICTTF (464 aa). Residues Asp-57 and Gly-58 each contribute to the Mn(2+) site. Basic and acidic residues predominate over residues 112 to 125; that stretch reads KDIGDEGKPKKAGG. Disordered regions lie at residues 112-136 and 170-294; these read KDIG…ADRI and GDVS…EEMV. Acidic residues-rich tracts occupy residues 173-192 and 260-294; these read SDDS…QDDT and ATEE…EEMV. Mn(2+) is bound by residues Asp-428 and Asp-477.

The protein belongs to the PP2C family. It depends on Mg(2+) as a cofactor. The cofactor is Mn(2+).

The catalysed reaction is O-phospho-L-seryl-[protein] + H2O = L-seryl-[protein] + phosphate. The enzyme catalyses O-phospho-L-threonyl-[protein] + H2O = L-threonyl-[protein] + phosphate. This chain is Protein phosphatase ppm-1.G, found in Caenorhabditis elegans.